The following is a 424-amino-acid chain: Enolase (424 aa).

Glutamine 162 is a (2R)-2-phosphoglycerate binding site. Catalysis depends on glutamate 204, which acts as the Proton donor. 3 residues coordinate Mg(2+): aspartate 241, glutamate 284, and aspartate 311. (2R)-2-phosphoglycerate contacts are provided by lysine 336, arginine 365, serine 366, and lysine 387. The active-site Proton acceptor is the lysine 336.

This sequence belongs to the enolase family. Requires Mg(2+) as cofactor.

Its subcellular location is the cytoplasm. The protein localises to the secreted. The protein resides in the cell surface. It catalyses the reaction (2R)-2-phosphoglycerate = phosphoenolpyruvate + H2O. Its pathway is carbohydrate degradation; glycolysis; pyruvate from D-glyceraldehyde 3-phosphate: step 4/5. Functionally, catalyzes the reversible conversion of 2-phosphoglycerate (2-PG) into phosphoenolpyruvate (PEP). It is essential for the degradation of carbohydrates via glycolysis. This is Enolase from Sinorhizobium fredii (strain NBRC 101917 / NGR234).